Reading from the N-terminus, the 262-residue chain is Hydroxyethylthiazole kinase (262 aa).

Methionine 44 is a binding site for substrate. Residues arginine 118 and threonine 166 each contribute to the ATP site. Glycine 193 is a substrate binding site.

It belongs to the Thz kinase family. Mg(2+) is required as a cofactor.

It catalyses the reaction 5-(2-hydroxyethyl)-4-methylthiazole + ATP = 4-methyl-5-(2-phosphooxyethyl)-thiazole + ADP + H(+). It participates in cofactor biosynthesis; thiamine diphosphate biosynthesis; 4-methyl-5-(2-phosphoethyl)-thiazole from 5-(2-hydroxyethyl)-4-methylthiazole: step 1/1. Its function is as follows. Catalyzes the phosphorylation of the hydroxyl group of 4-methyl-5-beta-hydroxyethylthiazole (THZ). The sequence is that of Hydroxyethylthiazole kinase from Chlamydia caviae (strain ATCC VR-813 / DSM 19441 / 03DC25 / GPIC) (Chlamydophila caviae).